Reading from the N-terminus, the 47-residue chain is Large ribosomal subunit protein bL33 (47 aa).

It belongs to the bacterial ribosomal protein bL33 family.

This Staphylococcus capitis protein is Large ribosomal subunit protein bL33.